The chain runs to 331 residues: Fructose-1,6-bisphosphatase class 1 2 (331 aa).

Residues glutamate 80, aspartate 98, leucine 100, and aspartate 101 each coordinate Mg(2+). Substrate is bound by residues 101 to 104 (DGSS) and asparagine 189. Residue glutamate 261 participates in Mg(2+) binding.

It belongs to the FBPase class 1 family. Homotetramer. Requires Mg(2+) as cofactor.

It localises to the cytoplasm. It carries out the reaction beta-D-fructose 1,6-bisphosphate + H2O = beta-D-fructose 6-phosphate + phosphate. It functions in the pathway carbohydrate biosynthesis; Calvin cycle. This Cereibacter sphaeroides (strain ATCC 17029 / ATH 2.4.9) (Rhodobacter sphaeroides) protein is Fructose-1,6-bisphosphatase class 1 2.